The primary structure comprises 954 residues: MGVSRPPSTPASKIERTPMSTPTPGGSTRVKEEKIFVTVRVRPLSKKELALKDQVAWECDDNQTILYKGPPQDRAAPTSYTFDKVFGPASQTEVVYEEGAKDVAMSALTGINATIFAYGQTSSGKTFTMRGVTESAVNDIYRHIENTPERDFIIKISAMEIYNEIVKDLLRPESTNLRLLDDPEKGTIVEKLEEEIAKDSQHLRHLISICEEQRQVGETALNDTSSRSHQIIRLTVESRLREVSGCVKSFVANLNFVDLAGSERAAQTHAVGARLKEGCHINRSLLTLTTVIRKLSSDKRSGHIPYRDSKLTRILQLSLGGNARTAIICTMSPAQTHVEQSRNTLFFATCAKEVTNNAKVNMVVSDKQLVKHLQMEVARLEAELRTPDRASSSEIIIMERDRKIRQMEKEMEELKKQRDNAQLKLEELQKKMGDNQPGWNPFDSPQRTRKCLTYSGSLQPSNKMKIRSSIRQSATAPFMLKHEIRKLEQLQQQLEVEANRAIEVLHKEVECHKHGNQDAAETIAKLQAEIRGMQSVRSDRDVDMITDEGNGSDLKEEISRLHMQDNDIAKLEAKLENVQRSIDRLVMSLPNVGTQCNETTPKSNRAKKKKRMLLPLGVSNINRPNLIRAPCSPLSSSRPLEPEVENRAPEGDTVSHEGSERATPTKSEDTGDVSSRDETPRYRRSSSVNMKKMQKMFQNAAEENVRNIRAYVTELKERVAKLQYQKQLLVCQVLELESNEGKTNDMEEDSEENAGSLQDGPDSWDRLFKEQMQHIIQLWDLCHVSIIHRTQFYLLFRGDRADQIYIEVEVRRLTWLQQHFAEVGDASPAAGDDSTISLASSIKALRNEREFLARRMGSRLTEEERERLFIKWQVPLEAKQRKLQLVNRLWTDPNDQAHIDESADIVARLVGFCEGGNISKEMFELNFAVPASRKPWLMGWQPISNMIREKTQLW.

Residues 1 to 29 (MGVSRPPSTPASKIERTPMSTPTPGGSTR) form a disordered region. The span at 17–28 (TPMSTPTPGGST) shows a compositional bias: low complexity. The Kinesin motor domain occupies 34-354 (KIFVTVRVRP…LFFATCAKEV (321 aa)). 119-126 (GQTSSGKT) contributes to the ATP binding site. Coiled coils occupy residues 363-436 (VVSD…GDNQ) and 480-588 (LKHE…LVMS). Disordered regions lie at residues 624-689 (PNLI…SSVN) and 741-762 (GKTNDMEEDSEENAGSLQDGPD). Positions 630 to 639 (PCSPLSSSRP) are enriched in low complexity. 2 stretches are compositionally biased toward basic and acidic residues: residues 640–660 (LEPEVENRAPEGDTVSHEGSE) and 666–681 (KSEDTGDVSSRDETPR).

Belongs to the TRAFAC class myosin-kinesin ATPase superfamily. Kinesin family. KIN-7 subfamily. As to expression, ubiquitous with a preferential expression in the shoot apical meristem (SAM).

Its function is as follows. May be essential to promote the progression of cytokinesis during node-internode differentiation. In Oryza sativa subsp. japonica (Rice), this protein is Kinesin-like protein KIN-7A.